Reading from the N-terminus, the 194-residue chain is MEESVKPVPKHANHRRSSVRSSLYGDVRDLWSTATMSTANVSVSDVCEDFDEEGKSVRNRIRKYSQTISIRDSLNLEPEEIQQQARRELELCHGRSLEHGEDHEESETSLASSTSESLIFSLWKPHRTYWTEQQNRLPLPLMELMETEVLDILKKALITYRSTIGRNHFMTKELQGYIEGIRKRRNKRLYFLDQ.

As to quaternary structure, component of the CatSper complex or CatSpermasome composed of the core pore-forming members CATSPER1, CATSPER2, CATSPER3 and CATSPER4 as well as auxiliary members CATSPERB, CATSPERG2, CATSPERD, CATSPERE, CATSPERZ, C2CD6/CATSPERT, SLCO6C1, TMEM249, TMEM262 and EFCAB9. HSPA1 may be an additional auxiliary complex member. The core complex members CATSPER1, CATSPER2, CATSPER3 and CATSPER4 form a heterotetrameric channel. The auxiliary CATSPERB, CATSPERG2, CATSPERD and CATSPERE subunits form a pavilion-like structure over the pore which stabilizes the complex through interactions with CATSPER4, CATSPER3, CATSPER1 and CATSPER2 respectively. SLCO6C1 interacts with CATSPERE and TMEM262/CATSPERH interacts with CATSPERB, further stabilizing the complex. C2CD6/CATSPERT interacts at least with CATSPERD and is required for targeting the CatSper complex in the flagellar membrane. Interacts with EFCAB9; the interaction is direct, Ca(2+)-dependent and connects EFCAB9 with the CatSper complex. Dissociates from EFCAB9 at elevated pH. As to expression, testis-specific. Expressed in adult but not in fetal testis. Not expressed in ovary. Within testis, expression is restricted to spermatids.

The protein resides in the cell projection. Its subcellular location is the cilium. It localises to the flagellum membrane. Its function is as follows. Auxiliary component of the CatSper complex, a complex involved in sperm cell hyperactivation. Sperm cell hyperactivation is needed for sperm motility which is essential late in the preparation of sperm for fertilization. Required for a distribution of the CatSper complex in linear quadrilateral nanodomains along the flagellum, maximizing fertilization inside the mammalian female reproductive tract. Together with EFCAB9, associates with the CatSper channel pore and is required for the two-row structure of each single CatSper channel. The protein is Cation channel sperm-associated auxiliary subunit zeta of Mus musculus (Mouse).